A 109-amino-acid polypeptide reads, in one-letter code: uncharacterized protein (109 aa).

Residues 63 to 85 (LFVKTFFACTYIIMLAFQVYIFL) traverse the membrane as a helical segment.

It is found in the membrane. This is an uncharacterized protein from Saccharomyces cerevisiae (strain ATCC 204508 / S288c) (Baker's yeast).